The primary structure comprises 232 residues: Ureidoacrylate amidohydrolase RutB (232 aa).

Catalysis depends on Asp26, which acts as the Proton acceptor. Lys135 is a catalytic residue. Residue Cys168 is the Nucleophile of the active site.

Belongs to the isochorismatase family. RutB subfamily.

It catalyses the reaction (Z)-3-ureidoacrylate + H2O + H(+) = (Z)-3-aminoacrylate + NH4(+) + CO2. The catalysed reaction is (Z)-3-ureidoacrylate + H2O = (Z)-3-aminoacrylate + carbamate + H(+). It carries out the reaction (Z)-2-methylureidoacrylate + H2O + H(+) = (Z)-2-methylaminoacrylate + NH4(+) + CO2. Its function is as follows. Hydrolyzes ureidoacrylate to form aminoacrylate and carbamate. The carbamate hydrolyzes spontaneously, thereby releasing one of the nitrogen atoms of the pyrimidine ring as ammonia and one of its carbon atoms as CO2. This is Ureidoacrylate amidohydrolase RutB from Cronobacter turicensis (strain DSM 18703 / CCUG 55852 / LMG 23827 / z3032).